Reading from the N-terminus, the 159-residue chain is NADH-quinone oxidoreductase subunit I (159 aa).

2 consecutive 4Fe-4S ferredoxin-type domains span residues 51–80 and 90–119; these read RRYENGEERCIACKLCEAICPAQAIVIEAD and TRYDIDMTKCIYCGLCQEACPVDAIVEGPN. Positions 60, 63, 66, 70, 99, 102, 105, and 109 each coordinate [4Fe-4S] cluster.

This sequence belongs to the complex I 23 kDa subunit family. In terms of assembly, NDH-1 is composed of 14 different subunits. Subunits NuoA, H, J, K, L, M, N constitute the membrane sector of the complex. [4Fe-4S] cluster is required as a cofactor.

Its subcellular location is the cell inner membrane. The enzyme catalyses a quinone + NADH + 5 H(+)(in) = a quinol + NAD(+) + 4 H(+)(out). Its function is as follows. NDH-1 shuttles electrons from NADH, via FMN and iron-sulfur (Fe-S) centers, to quinones in the respiratory chain. The immediate electron acceptor for the enzyme in this species is believed to be ubiquinone. Couples the redox reaction to proton translocation (for every two electrons transferred, four hydrogen ions are translocated across the cytoplasmic membrane), and thus conserves the redox energy in a proton gradient. This is NADH-quinone oxidoreductase subunit I from Rickettsia felis (strain ATCC VR-1525 / URRWXCal2) (Rickettsia azadi).